The sequence spans 845 residues: Translation initiation factor IF-2 (845 aa).

Disordered regions lie at residues 44 to 91 and 119 to 256; these read KRRK…NLSS and ARRA…NQEP. The segment covering 119–129 has biased composition (basic and acidic residues); the sequence is ARRAKEREESL. Positions 139–148 are enriched in acidic residues; the sequence is DETPQEEEEP. Residues 156-165 show a composition bias toward polar residues; the sequence is SLSPAQSQIE. 2 stretches are compositionally biased toward basic and acidic residues: residues 179-194 and 202-217; these read IEKR…DRNS and SEVR…DEKR. The region spanning 343–510 is the tr-type G domain; the sequence is LRPPVVTIMG…AILLQAEILD (168 aa). Residues 352 to 359 form a G1 region; it reads GHVDHGKT. A GTP-binding site is contributed by 352–359; that stretch reads GHVDHGKT. The segment at 377–381 is G2; that stretch reads GITQH. Residues 398–401 form a G3 region; the sequence is DTPG. GTP is bound by residues 398–402 and 452–455; these read DTPGH and NKID. The interval 452–455 is G4; it reads NKID. Residues 488-490 are G5; the sequence is SAK.

The protein belongs to the TRAFAC class translation factor GTPase superfamily. Classic translation factor GTPase family. IF-2 subfamily.

It is found in the cytoplasm. In terms of biological role, one of the essential components for the initiation of protein synthesis. Protects formylmethionyl-tRNA from spontaneous hydrolysis and promotes its binding to the 30S ribosomal subunits. Also involved in the hydrolysis of GTP during the formation of the 70S ribosomal complex. This is Translation initiation factor IF-2 from Bartonella henselae (strain ATCC 49882 / DSM 28221 / CCUG 30454 / Houston 1) (Rochalimaea henselae).